Reading from the N-terminus, the 55-residue chain is Large ribosomal subunit protein bL33 (55 aa).

This sequence belongs to the bacterial ribosomal protein bL33 family.

This Burkholderia cenocepacia (strain ATCC BAA-245 / DSM 16553 / LMG 16656 / NCTC 13227 / J2315 / CF5610) (Burkholderia cepacia (strain J2315)) protein is Large ribosomal subunit protein bL33.